The following is a 504-amino-acid chain: Maturase K (504 aa).

This sequence belongs to the intron maturase 2 family. MatK subfamily.

The protein resides in the plastid. It localises to the chloroplast. Functionally, usually encoded in the trnK tRNA gene intron. Probably assists in splicing its own and other chloroplast group II introns. This is Maturase K from Guizotia abyssinica (Niger).